The following is an 859-amino-acid chain: MADYTPMMQQYLQIKEEQQDAILFFRLGDFYEMFFEDARIASRELEIVLTARDGGAGSKIPMCGVPYHSVDNYLARLINRGYKVAICEQVEDPREAKGIVKREVTRIVTPGTIIEEQLLDQAKNNFLAAVEEEPLCTGIAYIDISTGEFWLSEIAGENARSRVESEILRISPAECLLAGSGSLTGSWEEEWLRQQNITLTVWDELPLSLERAESLLLRQLQVASLESFGLKSYSAGIKAAARIIAFLEETQKTSLQHIKSLRCYSSDNFLEMDFYSRRNLELTATLREGKREGSLLSILDESRTAMGKRLLRRWIEQPLREAGEIEERLDAVDELKNTLSLRTELTPLLSRINDLERLGGKIGASVASPRDLLGLKSSLAVINDIKKALQPCRSEILQRLAAMDALEEVFALIDASINDEAPLGIKEGELIKTGYKQEIDELRELSQEGSNWLVEFENREKQRTGIKNLKVGFNKVFGYYIEITKSNLSLAPADYHRKQTLVNSERFISDELKQYEEKILGSRERLYSLEYQEFIKIREALIPYLPRVMETAHAIAILDVLQGLAEVAYQNNYIRPEIDNSGKIRIRAGRHPVVEKALREARFVPNDLQLDRDKARFAIITGPNMGGKSTFMRQAALLVLMAQMGSFIPAEEARIGLVDKIFTRVGASDDLAAGQSTFMVEMIEVANILNNASDNSLVILDEIGRGTSTYDGLSIAQAVSEYLLENSRSKVLFATHYHQLTRLAEKLPGIINLSVSVKETGNTVVFLKKVLPGKADKSYGLHVARLAGLPEKLIIRAEDILQGLEKNKDSRPAPTLLQPLLFSDSHPVVDELKQLHIDDLSPREALQLLYQWQKMLDDK.

622-629 contributes to the ATP binding site; sequence GPNMGGKS.

The protein belongs to the DNA mismatch repair MutS family.

This protein is involved in the repair of mismatches in DNA. It is possible that it carries out the mismatch recognition step. This protein has a weak ATPase activity. The chain is DNA mismatch repair protein MutS from Syntrophomonas wolfei subsp. wolfei (strain DSM 2245B / Goettingen).